We begin with the raw amino-acid sequence, 162 residues long: Phosphopantetheine adenylyltransferase (162 aa).

Thr9 is a substrate binding site. Residues 9 to 10 (TF) and His17 each bind ATP. Substrate is bound by residues Lys41, Leu76, and Arg90. ATP-binding positions include 91–93 (GLR), Glu101, and 126–132 (HQAIASR).

Belongs to the bacterial CoaD family. In terms of assembly, homohexamer. Requires Mg(2+) as cofactor.

Its subcellular location is the cytoplasm. It carries out the reaction (R)-4'-phosphopantetheine + ATP + H(+) = 3'-dephospho-CoA + diphosphate. It participates in cofactor biosynthesis; coenzyme A biosynthesis; CoA from (R)-pantothenate: step 4/5. Reversibly transfers an adenylyl group from ATP to 4'-phosphopantetheine, yielding dephospho-CoA (dPCoA) and pyrophosphate. The protein is Phosphopantetheine adenylyltransferase of Caulobacter sp. (strain K31).